The chain runs to 275 residues: Shikimate dehydrogenase (NADP(+)) (275 aa).

Residues 19-21 and T66 contribute to the shikimate site; that span reads SIS. The active-site Proton acceptor is K70. 2 residues coordinate shikimate: N91 and D106. Residues 129-133, 153-158, and I219 each bind NADP(+); these read GAGGA and NRTYGR. Position 221 (Y221) interacts with shikimate. Residue G242 participates in NADP(+) binding.

This sequence belongs to the shikimate dehydrogenase family. Homodimer.

It catalyses the reaction shikimate + NADP(+) = 3-dehydroshikimate + NADPH + H(+). It participates in metabolic intermediate biosynthesis; chorismate biosynthesis; chorismate from D-erythrose 4-phosphate and phosphoenolpyruvate: step 4/7. Functionally, involved in the biosynthesis of the chorismate, which leads to the biosynthesis of aromatic amino acids. Catalyzes the reversible NADPH linked reduction of 3-dehydroshikimate (DHSA) to yield shikimate (SA). This is Shikimate dehydrogenase (NADP(+)) from Dictyoglomus thermophilum (strain ATCC 35947 / DSM 3960 / H-6-12).